Here is a 764-residue protein sequence, read N- to C-terminus: Protein Lines homolog 1 (764 aa).

2 disordered regions span residues 615-668 and 682-702; these read SQSQ…TSLC and WEEQ…SSPF. Residues 645–654 show a composition bias toward acidic residues; the sequence is DSSEASEEET. Position 650 is a phosphoserine (S650). Polar residues predominate over residues 658-668; sequence HLANSKQTSLC. A compositionally biased stretch (low complexity) spans 691–702; the sequence is EPLLSAESSSPF.

Belongs to the protein lines family.

The polypeptide is Protein Lines homolog 1 (Mus musculus (Mouse)).